Consider the following 515-residue polypeptide: Organic cation/carnitine transporter 5 (515 aa).

Residues 1 to 43 (MADSLAPLLPTHIEEDEDTSSPLTFDKILEKSLSDFGFSQFLQ) lie on the Cytoplasmic side of the membrane. Residues 44 to 64 (IVLVGLALTFDSQQIFITVFT) form a helical membrane-spanning segment. The Extracellular portion of the chain corresponds to 65 to 124 (DAYPTWHCLDHTICNPATTDICKIPRSAWDWDGGFKGKSVISEFDLECSSSFLRSLPSST). A helical transmembrane segment spans residues 125–145 (FYVGSIVGGVVLAMIPDGSLG). The Cytoplasmic portion of the chain corresponds to 146 to 149 (RKQL). The chain crosses the membrane as a helical span at residues 150–172 (LFFSSFAMSLTGISIFLSSNIWI). The Extracellular portion of the chain corresponds to 173-177 (YSFLK). Residues 178-195 (FVIGFARSQTGTYALVLI) traverse the membrane as a helical segment. ATP is bound at residue 195-202 (ISERISTK). Topologically, residues 196-208 (SERISTKWRPRAT) are cytoplasmic. The chain crosses the membrane as a helical span at residues 209-229 (MVPFTLFVLGFMSLSGIAYLV). The Extracellular portion of the chain corresponds to 230-235 (RHASWK). The chain crosses the membrane as a helical span at residues 236–256 (VLYLCTSIPAGIHSIFIYFFA). Over 257–320 (LESPRWLHLE…LFIIKWAFRR (64 aa)) the chain is Cytoplasmic. Residues 321-341 (VTLVMIIMFGLGMSYYGVPLA) traverse the membrane as a helical segment. Over 342–350 (VRDIKVNIY) the chain is Extracellular. Residues 351–371 (MSEALNAMVELPTFVVTPILL) traverse the membrane as a helical segment. Residues 372–379 (EQFSRRSS) lie on the Cytoplasmic side of the membrane. A helical membrane pass occupies residues 380–400 (VLVNCLIGGASGVLCFVMSLY). Residues 401-411 (GRTKIAFALEL) are Extracellular-facing. A helical membrane pass occupies residues 412–432 (GSFFCARIGFNLMAIYLVELF). Over 433–441 (PTCVRNSAT) the chain is Cytoplasmic. Residues 442-462 (MMLRQALVVGGACCPLIASLG) traverse the membrane as a helical segment. At 463-467 (RNVPS) the chain is on the extracellular side. The chain crosses the membrane as a helical span at residues 468–488 (LSFAVFGFAMSGLGLFALLLP). The Cytoplasmic segment spans residues 489-515 (ETKGLSLCDTMEEQEQRDQALKTSHSC).

This sequence belongs to the major facilitator (TC 2.A.1) superfamily. Organic cation transporter (TC 2.A.1.19) family. In terms of tissue distribution, mostly expressed in leaves and siliques, and, to a lower extent, in roots, stems and flowers.

Its subcellular location is the vacuole membrane. Functionally, high affinity carnitine transporter involved in the active cellular uptake of carnitine. Also transports organic cations. In Arabidopsis thaliana (Mouse-ear cress), this protein is Organic cation/carnitine transporter 5 (OCT5).